A 318-amino-acid chain; its full sequence is NADH-ubiquinone oxidoreductase chain 1 (318 aa).

Helical transmembrane passes span Phe2 to Leu22, Met69 to Leu89, Phe98 to Trp118, Ile140 to Phe160, His171 to Ala191, Leu222 to Phe242, Glu253 to Ile273, and Leu285 to Ile305.

Belongs to the complex I subunit 1 family. Core subunit of respiratory chain NADH dehydrogenase (Complex I) which is composed of 45 different subunits.

The protein resides in the mitochondrion inner membrane. The catalysed reaction is a ubiquinone + NADH + 5 H(+)(in) = a ubiquinol + NAD(+) + 4 H(+)(out). In terms of biological role, core subunit of the mitochondrial membrane respiratory chain NADH dehydrogenase (Complex I) which catalyzes electron transfer from NADH through the respiratory chain, using ubiquinone as an electron acceptor. Essential for the catalytic activity and assembly of complex I. This is NADH-ubiquinone oxidoreductase chain 1 (MT-ND1) from Saguinus leucopus (Silvery-brown bare-face tamarin).